Reading from the N-terminus, the 107-residue chain is IQ domain-containing protein F6 (107 aa).

The 30-residue stretch at 42-71 (QEWAVVKVQAQVRMWQARRRFLQARQAACI) folds into the IQ domain.

The sequence is that of IQ domain-containing protein F6 (IQCF6) from Homo sapiens (Human).